We begin with the raw amino-acid sequence, 147 residues long: Small ribosomal subunit protein bS16m (147 aa).

Belongs to the bacterial ribosomal protein bS16 family. Component of the mitochondrial ribosome small subunit (28S) which comprises a 12S rRNA and about 30 distinct proteins.

The protein localises to the mitochondrion. This chain is Small ribosomal subunit protein bS16m (mrps-16), found in Caenorhabditis elegans.